Consider the following 296-residue polypeptide: Protoheme IX farnesyltransferase (296 aa).

The Cytoplasmic portion of the chain corresponds to 1–9; it reads MMFKQYLQV. Residues 10–28 traverse the membrane as a helical segment; sequence TKPGIIFGNLISVIGGFLL. Over 29–37 the chain is Periplasmic; sequence ASKGSIDYP. A helical membrane pass occupies residues 38 to 56; it reads LFIYTLVGVSLVVASGCVF. Residues 57–78 are Cytoplasmic-facing; it reads NNYIDRDIDRKMERTKNRVLVK. A helical membrane pass occupies residues 79–97; sequence GLISPAVSLVYATLLGFAG. At 98–107 the chain is on the periplasmic side; the sequence is FMLLWFGANP. A helical transmembrane segment spans residues 108–126; the sequence is LACWLGVMGFVVYVGVYSL. Residues 127–197 lie on the Cytoplasmic side of the membrane; that stretch reads YMKRHSVYGT…YQAANIPVLP (71 aa). The helical transmembrane segment at 198-216 threads the bilayer; the sequence is VVKGISVAKNHITLYIIAF. At 217–228 the chain is on the periplasmic side; that stretch reads AVATLMLSLGGY. Residues 229–247 traverse the membrane as a helical segment; sequence AGYKYLVVAAAVSVWWLGM. The Cytoplasmic portion of the chain corresponds to 248–268; that stretch reads ALRGYKVADDRIWARKLFGFS. Residues 269–287 traverse the membrane as a helical segment; sequence IIAITALSVMMSVDFMVPD. The Periplasmic segment spans residues 288 to 296; the sequence is SHTLLAAVW.

This sequence belongs to the UbiA prenyltransferase family. Protoheme IX farnesyltransferase subfamily.

The protein resides in the cell inner membrane. It carries out the reaction heme b + (2E,6E)-farnesyl diphosphate + H2O = Fe(II)-heme o + diphosphate. The protein operates within porphyrin-containing compound metabolism; heme O biosynthesis; heme O from protoheme: step 1/1. Converts heme B (protoheme IX) to heme O by substitution of the vinyl group on carbon 2 of heme B porphyrin ring with a hydroxyethyl farnesyl side group. In Shigella sonnei (strain Ss046), this protein is Protoheme IX farnesyltransferase.